The sequence spans 201 residues: Large ribosomal subunit protein uL4 (201 aa).

A disordered region spans residues threonine 43–threonine 73.

Belongs to the universal ribosomal protein uL4 family. In terms of assembly, part of the 50S ribosomal subunit.

Its function is as follows. One of the primary rRNA binding proteins, this protein initially binds near the 5'-end of the 23S rRNA. It is important during the early stages of 50S assembly. It makes multiple contacts with different domains of the 23S rRNA in the assembled 50S subunit and ribosome. In terms of biological role, forms part of the polypeptide exit tunnel. The sequence is that of Large ribosomal subunit protein uL4 from Colwellia psychrerythraea (strain 34H / ATCC BAA-681) (Vibrio psychroerythus).